A 274-amino-acid polypeptide reads, in one-letter code: NH(3)-dependent NAD(+) synthetase (274 aa).

46–53 contacts ATP; that stretch reads GISGGQDS. D52 lines the Mg(2+) pocket. Residue R140 participates in deamido-NAD(+) binding. T160 contributes to the ATP binding site. Residue E165 participates in Mg(2+) binding. Residues K173 and D180 each coordinate deamido-NAD(+). ATP is bound by residues K189 and T211. 260–261 provides a ligand contact to deamido-NAD(+); it reads HK.

Belongs to the NAD synthetase family. Homodimer.

It carries out the reaction deamido-NAD(+) + NH4(+) + ATP = AMP + diphosphate + NAD(+) + H(+). Its pathway is cofactor biosynthesis; NAD(+) biosynthesis; NAD(+) from deamido-NAD(+) (ammonia route): step 1/1. Catalyzes the ATP-dependent amidation of deamido-NAD to form NAD. Uses ammonia as a nitrogen source. This is NH(3)-dependent NAD(+) synthetase from Streptococcus pneumoniae serotype 19F (strain G54).